Here is a 445-residue protein sequence, read N- to C-terminus: 3-phosphoshikimate 1-carboxyvinyltransferase (445 aa).

Lys21, Ser22, and Arg26 together coordinate 3-phosphoshikimate. Lys21 lines the phosphoenolpyruvate pocket. 2 residues coordinate phosphoenolpyruvate: Gly92 and Arg120. Residues Ser165, Gln166, Asp307, and Lys334 each contribute to the 3-phosphoshikimate site. A phosphoenolpyruvate-binding site is contributed by Gln166. Asp307 acts as the Proton acceptor in catalysis. Arg338, Arg379, and Lys405 together coordinate phosphoenolpyruvate.

It belongs to the EPSP synthase family. As to quaternary structure, monomer.

It localises to the cytoplasm. It catalyses the reaction 3-phosphoshikimate + phosphoenolpyruvate = 5-O-(1-carboxyvinyl)-3-phosphoshikimate + phosphate. It functions in the pathway metabolic intermediate biosynthesis; chorismate biosynthesis; chorismate from D-erythrose 4-phosphate and phosphoenolpyruvate: step 6/7. Functionally, catalyzes the transfer of the enolpyruvyl moiety of phosphoenolpyruvate (PEP) to the 5-hydroxyl of shikimate-3-phosphate (S3P) to produce enolpyruvyl shikimate-3-phosphate and inorganic phosphate. In Chlamydia abortus (strain DSM 27085 / S26/3) (Chlamydophila abortus), this protein is 3-phosphoshikimate 1-carboxyvinyltransferase.